A 188-amino-acid polypeptide reads, in one-letter code: HSCEICHNVGKSCEGSVEPCTSPEDQCGTVVLEFSPAPVSFRSIHKNCFSSSLCKLGSFDVNVGQNTYVRGRIQCCDEERCEEPQFSGHCASHPNGYYCPGIFGLFSLDSSANEAVCKGTETKCINIAGYRKEMYPGDIAYNIKGCISSCPELSLSNRTHEVDRNELIKVECTDAVKIPPSECQSSGI.

Intrachain disulfides connect Cys-3–Cys-27, Cys-6–Cys-13, Cys-20–Cys-48, Cys-54–Cys-75, Cys-76–Cys-81, Cys-99–Cys-124, Cys-117–Cys-146, and Cys-150–Cys-172. A glycan (N-linked (GlcNAc...) asparagine) is linked at Asn-157.

It belongs to the CNF-like-inhibitor family. Heterodimer with phospholipase A2 inhibitor 25 kDa. N-glycosylated. As to expression, expressed by the liver.

The protein resides in the secreted. In terms of biological role, inhibits the enzymatic activity of phospholipase A2. This chain is Phospholipase A2 inhibitor 31 kDa subunit, found in Naja kaouthia (Monocled cobra).